A 251-amino-acid polypeptide reads, in one-letter code: Pyrroloquinoline-quinone synthase (251 aa).

Belongs to the PqqC family.

The catalysed reaction is 6-(2-amino-2-carboxyethyl)-7,8-dioxo-1,2,3,4,7,8-hexahydroquinoline-2,4-dicarboxylate + 3 O2 = pyrroloquinoline quinone + 2 H2O2 + 2 H2O + H(+). It participates in cofactor biosynthesis; pyrroloquinoline quinone biosynthesis. Its function is as follows. Ring cyclization and eight-electron oxidation of 3a-(2-amino-2-carboxyethyl)-4,5-dioxo-4,5,6,7,8,9-hexahydroquinoline-7,9-dicarboxylic-acid to PQQ. The polypeptide is Pyrroloquinoline-quinone synthase (Pseudomonas putida (strain W619)).